Consider the following 238-residue polypeptide: CFA/I fimbrial subunit A (238 aa).

Residues 1-19 (MHKLFYLLSLLMAPFVANA) form the signal peptide.

It is found in the fimbrium. Its function is as follows. Might function as a shuttle protein in the transport of fimbria through the periplasmic space or might function as an adhesin. This Escherichia coli protein is CFA/I fimbrial subunit A (cfaA).